An 853-amino-acid polypeptide reads, in one-letter code: Cytochrome P450 monooxygenase mpaDE' (853 aa).

Residues 1–6 (MESLSL) are Lumenal-facing. A helical membrane pass occupies residues 7–29 (TWITAIAVVLYLVQRYVRSYWRL). Residues 30 to 853 (KDIPGPVLAK…DIENAIEGQK (824 aa)) are Cytoplasmic-facing. C449 contacts heme.

Belongs to the cytochrome P450 family. It depends on heme as a cofactor.

It is found in the endoplasmic reticulum membrane. It catalyses the reaction 5-methylorsellinate + reduced [NADPH--hemoprotein reductase] + O2 = 4,6-dihydroxy-2-(hydroxymethyl)-3-methylbenzoate + oxidized [NADPH--hemoprotein reductase] + H2O + H(+). It carries out the reaction 4,6-dihydroxy-2-(hydroxymethyl)-3-methylbenzoate + H(+) = 5,7-dihydroxy-4-methylphthalide + H2O. It participates in secondary metabolite biosynthesis; terpenoid biosynthesis. Its function is as follows. Cytochrome P450 monooxygenase; part of the gene cluster that mediates the biosynthesis of mycophenolic acid (MPA), the first isolated antibiotic natural product in the world obtained from a culture of Penicillium brevicompactum in 1893. MpaDE' is an endoplasmic reticulum-bound enzyme that catalyzes the conversion of 5-methylorsellinic acid (5MOA) into the phthalide compound 5,7-dihydroxy-4,6-dimethylphthalide (DHMP). MpaDE' first catalyzes hydroxylation of 5-MOA to 4,6-dihydroxy-2-(hydroxymethyl)-3-methylbenzoic acid (DHMB), and then acts as a lactone synthase that catalyzes the ring closure to convert DHMB into DHMP. The first step of the pathway is the synthesis of 5-methylorsellinic acid (5MOA) by the cytosolic polyketide synthase mpaC. 5MOA is then converted to the phthalide compound 5,7-dihydroxy-4,6-dimethylphthalide (DHMP) by the endoplasmic reticulum-bound cytochrome P450 monooxygenase mpaDE. MpaDE first catalyzes hydroxylation of 5-MOA to 4,6-dihydroxy-2-(hydroxymethyl)-3-methylbenzoic acid (DHMB). MpaDE then acts as a lactone synthase that catalyzes the ring closure to convert DHMB into DHMP. The next step is the prenylation of DHMP by the Golgi apparatus-associated prenyltransferase mpaA to yield farnesyl-DHMP (FDHMP). The ER-bound oxygenase mpaB then mediates the oxidative cleavage the C19-C20 double bond in FDHMP to yield FDHMP-3C via a mycophenolic aldehyde intermediate. The O-methyltransferase mpaG catalyzes the methylation of FDHMP-3C to yield MFDHMP-3C. After the cytosolic methylation of FDHMP-3C, MFDHMP-3C enters into peroxisomes probably via free diffusion due to its low molecular weight. Upon a peroxisomal CoA ligation reaction, catalyzed by a beta-oxidation component enzyme acyl-CoA ligase ACL891, MFDHMP-3C-CoA would then be restricted to peroxisomes for the following beta-oxidation pathway steps. The peroxisomal beta-oxidation machinery than converts MFDHMP-3C-CoA into MPA_CoA, via a beta-oxidation chain-shortening process. Finally mpaH acts as a peroxisomal acyl-CoA hydrolase with high substrate specificity toward MPA-CoA to release the final product MPA. The protein is Cytochrome P450 monooxygenase mpaDE' of Penicillium brevicompactum.